A 381-amino-acid chain; its full sequence is Ceramide-binding protein svf-1 (381 aa).

The segment at 1-18 (MFKWAQAALANVAGTKEP) is peripherally associates with membranes.

It belongs to the SVF1 family.

It is found in the golgi apparatus. The protein localises to the cis-Golgi network membrane. It localises to the endoplasmic reticulum membrane. The protein resides in the cytoplasm. Its subcellular location is the nucleus. Its function is as follows. Ceramide-binding protein that may transfer ceramides from the endoplasmic reticulum membrane to the cis-Golgi network membrane, and is thereby required for the biosynthesis of complex sphingolipids. In Neurospora crassa (strain ATCC 24698 / 74-OR23-1A / CBS 708.71 / DSM 1257 / FGSC 987), this protein is Ceramide-binding protein svf-1 (svf-1).